We begin with the raw amino-acid sequence, 267 residues long: Small ribosomal subunit protein uS2 (267 aa).

Residues 237–267 (IGESAAAPSEPALETASAEATAEGEQPGSQA) are disordered. Over residues 238-261 (GESAAAPSEPALETASAEATAEGE) the composition is skewed to low complexity.

Belongs to the universal ribosomal protein uS2 family.

In Chelativorans sp. (strain BNC1), this protein is Small ribosomal subunit protein uS2.